A 214-amino-acid polypeptide reads, in one-letter code: Thymidylate kinase (214 aa).

An ATP-binding site is contributed by 10 to 17 (GPDGAGKT).

The protein belongs to the thymidylate kinase family.

It catalyses the reaction dTMP + ATP = dTDP + ADP. Functionally, phosphorylation of dTMP to form dTDP in both de novo and salvage pathways of dTTP synthesis. This Latilactobacillus sakei subsp. sakei (strain 23K) (Lactobacillus sakei subsp. sakei) protein is Thymidylate kinase.